The following is a 730-amino-acid chain: Wall-associated receptor kinase-like 3 (730 aa).

Residues 1–25 (MKTKTYNFRYIVASVLTLLMNGSSA) form the signal peptide. The Extracellular portion of the chain corresponds to 26–357 (ATPPNSNSSS…AKLAHVLRGV (332 aa)). N-linked (GlcNAc...) asparagine glycosylation is found at Asn32, Asn38, Asn68, Asn90, Asn119, Asn132, Asn212, Asn233, and Asn269. The segment at 283-340 (CLCRYGYFSRMSYRSCYCGSGYRGNPYIRGGCIDIDECEVPNKCGEDTCVNMAGRYSC) is atypical EGF-like. Disulfide bonds link Cys285-Cys298, Cys320-Cys331, and Cys326-Cys340. The helical transmembrane segment at 358–378 (LIGLLGLLFFVIGIFGLYKFI) threads the bilayer. At 379-730 (RKRRRIIRSM…LMEINRIYDS (352 aa)) the chain is on the cytoplasmic side. The Protein kinase domain maps to 428-699 (FSIDRVLGQG…REVSIKLERI (272 aa)). ATP contacts are provided by residues 434–442 (LGQGGQGTV) and Lys456. Asp553 functions as the Proton acceptor in the catalytic mechanism. The segment at 703–730 (PKDLDVHTENEEEEEEDQLMEINRIYDS) is disordered. A compositionally biased stretch (acidic residues) spans 712–721 (NEEEEEEDQL).

Belongs to the protein kinase superfamily. Ser/Thr protein kinase family. Preferentially expressed in roots and flowers.

The protein localises to the membrane. The enzyme catalyses L-seryl-[protein] + ATP = O-phospho-L-seryl-[protein] + ADP + H(+). It carries out the reaction L-threonyl-[protein] + ATP = O-phospho-L-threonyl-[protein] + ADP + H(+). Serine/threonine-protein kinase that may function as a signaling receptor of extracellular matrix component. In Arabidopsis thaliana (Mouse-ear cress), this protein is Wall-associated receptor kinase-like 3 (WAKL3).